Reading from the N-terminus, the 367-residue chain is GTP cyclohydrolase FolE2 (367 aa).

Belongs to the GTP cyclohydrolase IV family.

It catalyses the reaction GTP + H2O = 7,8-dihydroneopterin 3'-triphosphate + formate + H(+). It participates in cofactor biosynthesis; 7,8-dihydroneopterin triphosphate biosynthesis; 7,8-dihydroneopterin triphosphate from GTP: step 1/1. Its function is as follows. Converts GTP to 7,8-dihydroneopterin triphosphate. The sequence is that of GTP cyclohydrolase FolE2 from Dinoroseobacter shibae (strain DSM 16493 / NCIMB 14021 / DFL 12).